Consider the following 156-residue polypeptide: 6,7-dimethyl-8-ribityllumazine synthase (156 aa).

Residues Phe-22, 57 to 59, and 81 to 83 contribute to the 5-amino-6-(D-ribitylamino)uracil site; these read AYE and TVI. Residue 86-87 participates in (2S)-2-hydroxy-3-oxobutyl phosphate binding; that stretch reads GT. His-89 (proton donor) is an active-site residue. Phe-114 is a binding site for 5-amino-6-(D-ribitylamino)uracil. Arg-128 is a binding site for (2S)-2-hydroxy-3-oxobutyl phosphate.

Belongs to the DMRL synthase family. Forms an icosahedral capsid composed of 60 subunits, arranged as a dodecamer of pentamers.

It carries out the reaction (2S)-2-hydroxy-3-oxobutyl phosphate + 5-amino-6-(D-ribitylamino)uracil = 6,7-dimethyl-8-(1-D-ribityl)lumazine + phosphate + 2 H2O + H(+). It participates in cofactor biosynthesis; riboflavin biosynthesis; riboflavin from 2-hydroxy-3-oxobutyl phosphate and 5-amino-6-(D-ribitylamino)uracil: step 1/2. Its function is as follows. Catalyzes the formation of 6,7-dimethyl-8-ribityllumazine by condensation of 5-amino-6-(D-ribitylamino)uracil with 3,4-dihydroxy-2-butanone 4-phosphate. This is the penultimate step in the biosynthesis of riboflavin. This is 6,7-dimethyl-8-ribityllumazine synthase from Salmonella agona (strain SL483).